The chain runs to 349 residues: N-acetyl-gamma-glutamyl-phosphate reductase (349 aa).

The active site involves cysteine 149.

This sequence belongs to the NAGSA dehydrogenase family. Type 1 subfamily.

The protein resides in the cytoplasm. The enzyme catalyses N-acetyl-L-glutamate 5-semialdehyde + phosphate + NADP(+) = N-acetyl-L-glutamyl 5-phosphate + NADPH + H(+). The protein operates within amino-acid biosynthesis; L-arginine biosynthesis; N(2)-acetyl-L-ornithine from L-glutamate: step 3/4. Catalyzes the NADPH-dependent reduction of N-acetyl-5-glutamyl phosphate to yield N-acetyl-L-glutamate 5-semialdehyde. The polypeptide is N-acetyl-gamma-glutamyl-phosphate reductase (Acinetobacter baumannii (strain AB307-0294)).